The sequence spans 280 residues: Tryptophan synthase alpha chain (280 aa).

Catalysis depends on proton acceptor residues Glu-50 and Asp-61.

Belongs to the TrpA family. Tetramer of two alpha and two beta chains.

It catalyses the reaction (1S,2R)-1-C-(indol-3-yl)glycerol 3-phosphate + L-serine = D-glyceraldehyde 3-phosphate + L-tryptophan + H2O. It functions in the pathway amino-acid biosynthesis; L-tryptophan biosynthesis; L-tryptophan from chorismate: step 5/5. Functionally, the alpha subunit is responsible for the aldol cleavage of indoleglycerol phosphate to indole and glyceraldehyde 3-phosphate. In Methylorubrum extorquens (strain CM4 / NCIMB 13688) (Methylobacterium extorquens), this protein is Tryptophan synthase alpha chain.